The chain runs to 459 residues: MDLDTITSISTPMGEGAIGIVRLSGPQAVEIADKLYKGKHLLNDVPSHTINYGHIIDPESKEVIEEVMVSVLRAPKTFTREDIIEINCHGGILTINRVLELTMTYGARMAEPGEFTKRAFLNGRIDLSQAEAVMDFIRSKTDRASKVAMNQIEGRLSDLIKKQRQSILEILAQVEVNIDYPEYDDVEDATTEFLLEQSKEIKQEINRLLDTGAQGKIMREGLSTVIVGKPNVGKSSMLNNLIQDNKAIVTEVAGTTRDVLEEYVNVRGVPLRLVDTAGIRETEDIVEKIGVERSRKALSQADLILFVLNNNEALTQEDYTLYEVVKNEDVIVIVNKMDLEQNIDINEVKDMIGDTPLIQTSMLKQEGIDELEIQIRDLFFGGEVQNQDMTYVSNSRHISLLKQARQTIQDAIDAAESGVPMDMVQIDLTRTWEILGEIIGETASDELIDQLFSQFCLGK.

The (6S)-5-formyl-5,6,7,8-tetrahydrofolate site is built by Arg-22, Glu-85, and Arg-124. One can recognise a TrmE-type G domain in the interval 221–380 (GLSTVIVGKP…LEIQIRDLFF (160 aa)). Asn-231 is a binding site for K(+). GTP is bound by residues 231-236 (NVGKSS), 250-256 (TEVAGTT), and 275-278 (DTAG). A Mg(2+)-binding site is contributed by Ser-235. Residues Thr-250, Val-252, and Thr-255 each contribute to the K(+) site. Thr-256 is a Mg(2+) binding site. Lys-459 provides a ligand contact to (6S)-5-formyl-5,6,7,8-tetrahydrofolate.

This sequence belongs to the TRAFAC class TrmE-Era-EngA-EngB-Septin-like GTPase superfamily. TrmE GTPase family. Homodimer. Heterotetramer of two MnmE and two MnmG subunits. Requires K(+) as cofactor.

The protein resides in the cytoplasm. Its function is as follows. Exhibits a very high intrinsic GTPase hydrolysis rate. Involved in the addition of a carboxymethylaminomethyl (cmnm) group at the wobble position (U34) of certain tRNAs, forming tRNA-cmnm(5)s(2)U34. This Staphylococcus aureus (strain USA300 / TCH1516) protein is tRNA modification GTPase MnmE.